Reading from the N-terminus, the 67-residue chain is Probable Sec-independent protein translocase protein TatE (67 aa).

A helical transmembrane segment spans residues 4-21; it reads ISITKLLVVAALVVLLFG. The tract at residues 46–67 is disordered; the sequence is EDAGAKKEAGGDIQAEKLSHKE.

The protein belongs to the TatA/E family. TatE subfamily.

Its subcellular location is the cell inner membrane. Functionally, part of the twin-arginine translocation (Tat) system that transports large folded proteins containing a characteristic twin-arginine motif in their signal peptide across membranes. TatE shares overlapping functions with TatA. The sequence is that of Probable Sec-independent protein translocase protein TatE from Citrobacter koseri (strain ATCC BAA-895 / CDC 4225-83 / SGSC4696).